The primary structure comprises 497 residues: tRNA-2-methylthio-N(6)-dimethylallyladenosine synthase (497 aa).

The MTTase N-terminal domain occupies Arg-4 to His-120. 6 residues coordinate [4Fe-4S] cluster: Cys-13, Cys-49, Cys-83, Cys-157, Cys-161, and Cys-164. Residues Arg-143 to Gln-374 form the Radical SAM core domain. Positions Arg-376 to Leu-445 constitute a TRAM domain.

Belongs to the methylthiotransferase family. MiaB subfamily. In terms of assembly, monomer. Requires [4Fe-4S] cluster as cofactor.

It is found in the cytoplasm. The catalysed reaction is N(6)-dimethylallyladenosine(37) in tRNA + (sulfur carrier)-SH + AH2 + 2 S-adenosyl-L-methionine = 2-methylsulfanyl-N(6)-dimethylallyladenosine(37) in tRNA + (sulfur carrier)-H + 5'-deoxyadenosine + L-methionine + A + S-adenosyl-L-homocysteine + 2 H(+). Functionally, catalyzes the methylthiolation of N6-(dimethylallyl)adenosine (i(6)A), leading to the formation of 2-methylthio-N6-(dimethylallyl)adenosine (ms(2)i(6)A) at position 37 in tRNAs that read codons beginning with uridine. This chain is tRNA-2-methylthio-N(6)-dimethylallyladenosine synthase, found in Frankia alni (strain DSM 45986 / CECT 9034 / ACN14a).